The primary structure comprises 2324 residues: Serine/threonine-protein kinase MEC1 (2324 aa).

The 553-residue stretch at 1349–1901 (VLAQKSLETN…LWYITVLLNS (553 aa)) folds into the FAT domain. In terms of domain architecture, PI3K/PI4K catalytic spans 2005–2308 (FTPHYKVYSS…QVDTVVQQAS (304 aa)). The tract at residues 2011–2017 (VYSSLKK) is G-loop. The interval 2177-2185 (GLGDRHLEN) is catalytic loop. Residues 2197-2221 (HVDFDCLFEKGKTLPVPEIVPFRLT) form an activation loop region. Residues 2292–2324 (LPLSVPGQVDTVVQQASSDENLAQMYIGWLPFW) form the FATC domain.

This sequence belongs to the PI3/PI4-kinase family. ATM subfamily.

The protein localises to the nucleus. The enzyme catalyses L-seryl-[protein] + ATP = O-phospho-L-seryl-[protein] + ADP + H(+). It catalyses the reaction L-threonyl-[protein] + ATP = O-phospho-L-threonyl-[protein] + ADP + H(+). Functionally, serine/threonine protein kinase which activates checkpoint signaling upon genotoxic stresses such as ionizing radiation (IR), ultraviolet light (UV), or DNA replication stalling, thereby acting as a DNA damage sensor. Recognizes the substrate consensus sequence [ST]-Q. Recruited to DNA lesions in order to initiate the DNA repair by homologous recombination. Phosphorylates histone H2A to form H2AS128ph (gamma-H2A) at sites of DNA damage, also involved in the regulation of DNA damage response mechanism. Required for cell growth and meiotic recombination. This is Serine/threonine-protein kinase MEC1 (MEC1) from Eremothecium gossypii (strain ATCC 10895 / CBS 109.51 / FGSC 9923 / NRRL Y-1056) (Yeast).